The chain runs to 578 residues: Glutamate--tRNA ligase (578 aa).

Positions proline 97 to asparagine 107 match the 'HIGH' region motif.

The protein belongs to the class-I aminoacyl-tRNA synthetase family. Glutamate--tRNA ligase type 2 subfamily.

Its subcellular location is the cytoplasm. The catalysed reaction is tRNA(Glu) + L-glutamate + ATP = L-glutamyl-tRNA(Glu) + AMP + diphosphate. Catalyzes the attachment of glutamate to tRNA(Glu) in a two-step reaction: glutamate is first activated by ATP to form Glu-AMP and then transferred to the acceptor end of tRNA(Glu). In Hyperthermus butylicus (strain DSM 5456 / JCM 9403 / PLM1-5), this protein is Glutamate--tRNA ligase.